We begin with the raw amino-acid sequence, 162 residues long: Cyclic pyranopterin monophosphate synthase (162 aa).

Substrate-binding positions include 75–77 and 113–114; these read LCH and ME. Residue D128 is part of the active site.

Belongs to the MoaC family. As to quaternary structure, homohexamer; trimer of dimers.

It catalyses the reaction (8S)-3',8-cyclo-7,8-dihydroguanosine 5'-triphosphate = cyclic pyranopterin phosphate + diphosphate. The protein operates within cofactor biosynthesis; molybdopterin biosynthesis. Functionally, catalyzes the conversion of (8S)-3',8-cyclo-7,8-dihydroguanosine 5'-triphosphate to cyclic pyranopterin monophosphate (cPMP). The protein is Cyclic pyranopterin monophosphate synthase of Klebsiella pneumoniae (strain 342).